The following is a 74-amino-acid chain: Cecropin-P2 (74 aa).

The first 13 residues, 1–13 (MIFIYLLVQTAES), serve as a signal peptide directing secretion. A propeptide spans 45-74 (RRRFVVQQDTISPRLEVDERFLPNSVQEQI) (removed in mature form).

Belongs to the cecropin family. As to expression, expressed in the body wall, intestine, uterus and ovary.

It is found in the secreted. Functionally, has antibacterial activity against several Gram-positive and Gram-negative bacteria. Is weakly active against yeasts. Acts by a nonpore mechanism. The protein is Cecropin-P2 (ASCEC-2) of Ascaris suum (Pig roundworm).